The following is a 303-amino-acid chain: Probable phytol kinase, chloroplastic (303 aa).

The N-terminal 49 residues, Met-1–Val-49, are a transit peptide targeting the chloroplast. 6 helical membrane-spanning segments follow: residues Val-98–Thr-118, Tyr-122–Thr-144, Tyr-168–Val-188, Phe-227–Ile-247, Ala-254–Thr-274, and Val-276–Ser-296.

Belongs to the polyprenol kinase family.

Its subcellular location is the plastid. It is found in the chloroplast membrane. The catalysed reaction is phytol + CTP = phytyl phosphate + CDP + H(+). Its pathway is cofactor biosynthesis; tocopherol biosynthesis. Involved in the activation and reutilization of phytol from chlorophyll degradation in plant metabolism, including tocopherol biosynthesis. Catalyzes the conversion of phytol to phytol monophosphate (PMP). This Zea mays (Maize) protein is Probable phytol kinase, chloroplastic.